The sequence spans 572 residues: Proline--tRNA ligase (572 aa).

This sequence belongs to the class-II aminoacyl-tRNA synthetase family. ProS type 1 subfamily. As to quaternary structure, homodimer.

The protein resides in the cytoplasm. It catalyses the reaction tRNA(Pro) + L-proline + ATP = L-prolyl-tRNA(Pro) + AMP + diphosphate. Its function is as follows. Catalyzes the attachment of proline to tRNA(Pro) in a two-step reaction: proline is first activated by ATP to form Pro-AMP and then transferred to the acceptor end of tRNA(Pro). As ProRS can inadvertently accommodate and process non-cognate amino acids such as alanine and cysteine, to avoid such errors it has two additional distinct editing activities against alanine. One activity is designated as 'pretransfer' editing and involves the tRNA(Pro)-independent hydrolysis of activated Ala-AMP. The other activity is designated 'posttransfer' editing and involves deacylation of mischarged Ala-tRNA(Pro). The misacylated Cys-tRNA(Pro) is not edited by ProRS. The polypeptide is Proline--tRNA ligase (Bacillus licheniformis (strain ATCC 14580 / DSM 13 / JCM 2505 / CCUG 7422 / NBRC 12200 / NCIMB 9375 / NCTC 10341 / NRRL NRS-1264 / Gibson 46)).